The chain runs to 135 residues: uncharacterized protein (135 aa).

Residues 1 to 70 (MKPDWPRRGA…RWRPQGTGTG (70 aa)) form a disordered region.

This is an uncharacterized protein from Homo sapiens (Human).